We begin with the raw amino-acid sequence, 325 residues long: Tagatose 1,6-diphosphate aldolase 1 (325 aa).

It belongs to the aldolase LacD family.

The catalysed reaction is D-tagatofuranose 1,6-bisphosphate = D-glyceraldehyde 3-phosphate + dihydroxyacetone phosphate. It functions in the pathway carbohydrate metabolism; D-tagatose 6-phosphate degradation; D-glyceraldehyde 3-phosphate and glycerone phosphate from D-tagatose 6-phosphate: step 2/2. This chain is Tagatose 1,6-diphosphate aldolase 1, found in Streptococcus agalactiae serotype III (strain NEM316).